Here is a 232-residue protein sequence, read N- to C-terminus: 5'-methylthioadenosine/S-adenosylhomocysteine nucleosidase (232 aa).

Glu12 serves as the catalytic Proton acceptor. Residues Gly78, Ile152, and 173 to 174 contribute to the substrate site; that span reads ME. The Proton donor role is filled by Asp197.

The protein belongs to the PNP/UDP phosphorylase family. MtnN subfamily. Homodimer.

It catalyses the reaction S-adenosyl-L-homocysteine + H2O = S-(5-deoxy-D-ribos-5-yl)-L-homocysteine + adenine. It carries out the reaction S-methyl-5'-thioadenosine + H2O = 5-(methylsulfanyl)-D-ribose + adenine. The enzyme catalyses 5'-deoxyadenosine + H2O = 5-deoxy-D-ribose + adenine. It participates in amino-acid biosynthesis; L-methionine biosynthesis via salvage pathway; S-methyl-5-thio-alpha-D-ribose 1-phosphate from S-methyl-5'-thioadenosine (hydrolase route): step 1/2. Functionally, catalyzes the irreversible cleavage of the glycosidic bond in both 5'-methylthioadenosine (MTA) and S-adenosylhomocysteine (SAH/AdoHcy) to adenine and the corresponding thioribose, 5'-methylthioribose and S-ribosylhomocysteine, respectively. Also cleaves 5'-deoxyadenosine, a toxic by-product of radical S-adenosylmethionine (SAM) enzymes, into 5-deoxyribose and adenine. Thus, is required for in vivo function of the radical SAM enzymes biotin synthase and lipoic acid synthase, that are inhibited by 5'-deoxyadenosine accumulation. The chain is 5'-methylthioadenosine/S-adenosylhomocysteine nucleosidase from Pectobacterium carotovorum subsp. carotovorum (strain PC1).